A 621-amino-acid polypeptide reads, in one-letter code: tRNA 5-methylaminomethyl-2-thiouridine biosynthesis bifunctional protein MnmC (621 aa).

Residues 1–222 (MKNANLSFKG…KRQMSSAVLE (222 aa)) form a tRNA (mnm(5)s(2)U34)-methyltransferase region. The interval 250-621 (IGTGVAGLAT…LIRKLKKGLK (372 aa)) is FAD-dependent cmnm(5)s(2)U34 oxidoreductase.

In the N-terminal section; belongs to the methyltransferase superfamily. tRNA (mnm(5)s(2)U34)-methyltransferase family. The protein in the C-terminal section; belongs to the DAO family. Requires FAD as cofactor.

It is found in the cytoplasm. It carries out the reaction 5-aminomethyl-2-thiouridine(34) in tRNA + S-adenosyl-L-methionine = 5-methylaminomethyl-2-thiouridine(34) in tRNA + S-adenosyl-L-homocysteine + H(+). Catalyzes the last two steps in the biosynthesis of 5-methylaminomethyl-2-thiouridine (mnm(5)s(2)U) at the wobble position (U34) in tRNA. Catalyzes the FAD-dependent demodification of cmnm(5)s(2)U34 to nm(5)s(2)U34, followed by the transfer of a methyl group from S-adenosyl-L-methionine to nm(5)s(2)U34, to form mnm(5)s(2)U34. This chain is tRNA 5-methylaminomethyl-2-thiouridine biosynthesis bifunctional protein MnmC, found in Campylobacter concisus (strain 13826).